The sequence spans 142 residues: Transcriptional regulator MraZ (142 aa).

SpoVT-AbrB domains follow at residues 5-47 and 76-119; these read EYQH…TINE and ACIV…SREK.

It belongs to the MraZ family. As to quaternary structure, forms oligomers.

It is found in the cytoplasm. The protein resides in the nucleoid. This chain is Transcriptional regulator MraZ, found in Clostridium botulinum (strain Eklund 17B / Type B).